A 225-amino-acid polypeptide reads, in one-letter code: Ras-related protein Rab-32 (225 aa).

An N-acetylalanine modification is found at alanine 2. Residues valine 36, glycine 37, lysine 38, threonine 39, serine 40, serine 51, glutamine 52, tyrosine 54, and threonine 57 each coordinate GTP. Residue threonine 39 coordinates Mg(2+). A Switch 1 motif is present at residues 48–62; the sequence is QLFSQHYRATIGVDF. Threonine 57 is a binding site for Mg(2+). Position 71 is a phosphoserine (serine 71). A Mg(2+)-binding site is contributed by aspartate 81. Glycine 84, asparagine 143, lysine 144, aspartate 146, alanine 175, and lysine 176 together coordinate GTP. A Switch 2 motif is present at residues 84-97; it reads GQERFGNMTRVYYK. The interval 178–197 is PKA-RII subunit binding domain; sequence NINIEEAARFLVEKILVNHQ. 2 S-geranylgeranyl cysteine lipidation sites follow: cysteine 224 and cysteine 225.

The protein belongs to the small GTPase superfamily. Rab family. As to quaternary structure, interacts with ANKRD27. A decreased interaction with ANKRD27 seen in the presence of SGSM2. Interacts with LRRK2 (via N-terminus); this interaction results in stimulation of RAB10 phosphorylation by LRRK2. It depends on Mg(2+) as a cofactor. In terms of tissue distribution, widely expressed with high levels in heart, liver, kidney, bone marrow, testis, colon and fetal lung.

It localises to the mitochondrion. It is found in the mitochondrion outer membrane. The protein localises to the cytoplasmic vesicle. The protein resides in the phagosome. Its subcellular location is the phagosome membrane. It localises to the melanosome. It is found in the melanosome membrane. It carries out the reaction GTP + H2O = GDP + phosphate + H(+). Regulated by guanine the nucleotide exchange factor (GEF) BLOC-3 complex composed of HPS1 and HPS4 which promote the exchange of bound GDP for free GTP. Regulated by the GTPase activating protein (GAP) SGSM2/RUTBC1 which increases the GTP hydrolysis activity. Inhibited by GDP dissociation inhibitors (GDIs) which prevent Rab-GDP dissociation. The small GTPases Rab are key regulators of intracellular membrane trafficking, from the formation of transport vesicles to their fusion with membranes. Rabs cycle between an inactive GDP-bound form and an active GTP-bound form that is able to recruit to membranes different set of downstream effectors directly responsible for vesicle formation, movement, tethering and fusion. Also acts as an A-kinase anchoring protein by binding to the type II regulatory subunit of protein kinase A and anchoring it to the mitochondrion. Also involved in synchronization of mitochondrial fission. Plays a role in the maturation of phagosomes that engulf pathogens, such as S.aureus and M.tuberculosis. Plays an important role in the control of melanin production and melanosome biogenesis. In concert with RAB38, regulates the proper trafficking of melanogenic enzymes TYR, TYRP1 and DCT/TYRP2 to melanosomes in melanocytes. Stimulates phosphorylation of RAB10 'Thr-73' by LRRK2. This Homo sapiens (Human) protein is Ras-related protein Rab-32.